The primary structure comprises 641 residues: Putative phagocytic receptor 1a (641 aa).

Positions 1-23 are cleaved as a signal peptide; sequence MKINKKQIVFFILFSIFLNHVNG. Residues 24–279 lie on the Extracellular side of the membrane; the sequence is IFYLPGMIPH…ESNDNSVHWF (256 aa). Residues 280–300 form a helical membrane-spanning segment; it reads SILNSLMIVFILTVMVAMIII. Residues 301–349 lie on the Cytoplasmic side of the membrane; the sequence is RTLKKDIRRYTSIDTSEDRDSQEETGWKMIHGDVFRPPSHPMLLSVCIG. A helical membrane pass occupies residues 350–370; that stretch reads SGVQIFSMTLITMIFAVLGFL. At 371–374 the chain is on the extracellular side; it reads SPAN. A helical membrane pass occupies residues 375–395; the sequence is IGGLATALIVLFVLSAMFAGY. Residues 396–413 are Cytoplasmic-facing; that stretch reads FSTRVFTIFKGRNWKKNT. The helical transmembrane segment at 414–434 threads the bilayer; the sequence is IYTALSMPGIIFGIFFFVNMF. Topologically, residues 435–445 are extracellular; it reads LRGAKSSAAVP. Residues 446–466 form a helical membrane-spanning segment; sequence FGTFASIIAMWFGISVPLVFL. The Cytoplasmic segment spans residues 467 to 502; sequence GSYFASKKPVPEDPVRTNQIPRQVPDQIWYMNPYLS. A helical membrane pass occupies residues 503-523; sequence ILMGGILPFGAVFIELHFILT. Topologically, residues 524-532 are extracellular; that stretch reads SLWDNQFYY. The helical transmembrane segment at 533 to 553 threads the bilayer; it reads IFGFLFIVLMILIVTSAEISI. Residues 554–578 are Cytoplasmic-facing; the sequence is VMCYFQLCAEDHHWWWRSFLTAGSS. Residues 579 to 599 traverse the membrane as a helical segment; the sequence is SLYMFIYSVSFFRYLGITKFI. Over 600–608 the chain is Extracellular; that stretch reads SSLLDFSYS. Residues 609–629 form a helical membrane-spanning segment; sequence FIMSLAFAALTGTIGFYSCYF. Residues 630–641 lie on the Cytoplasmic side of the membrane; the sequence is LVRKIYSSIHIN.

The protein belongs to the nonaspanin (TM9SF) (TC 9.A.2) family.

The protein localises to the membrane. In terms of biological role, involved in adhesion, phagocytosis of hydrophilic particles and intracellular killing of bacteria. Associates with proteins harboring glycine-rich transmembrane domains and ensures their efficient localization to the cell surface. The protein is Putative phagocytic receptor 1a (phg1a) of Dictyostelium discoideum (Social amoeba).